The following is a 340-amino-acid chain: UPF0284 protein Saci_0020 (340 aa).

Belongs to the UPF0284 family.

This is UPF0284 protein Saci_0020 from Sulfolobus acidocaldarius (strain ATCC 33909 / DSM 639 / JCM 8929 / NBRC 15157 / NCIMB 11770).